The following is a 131-amino-acid chain: Small ribosomal subunit protein uS11 (131 aa).

It belongs to the universal ribosomal protein uS11 family. As to quaternary structure, part of the 30S ribosomal subunit. Interacts with proteins S7 and S18. Binds to IF-3.

Its function is as follows. Located on the platform of the 30S subunit, it bridges several disparate RNA helices of the 16S rRNA. Forms part of the Shine-Dalgarno cleft in the 70S ribosome. This is Small ribosomal subunit protein uS11 from Chromobacterium violaceum (strain ATCC 12472 / DSM 30191 / JCM 1249 / CCUG 213 / NBRC 12614 / NCIMB 9131 / NCTC 9757 / MK).